The following is a 176-amino-acid chain: Peptide methionine sulfoxide reductase MsrA (176 aa).

C10 is an active-site residue.

It belongs to the MsrA Met sulfoxide reductase family.

The enzyme catalyses L-methionyl-[protein] + [thioredoxin]-disulfide + H2O = L-methionyl-(S)-S-oxide-[protein] + [thioredoxin]-dithiol. The catalysed reaction is [thioredoxin]-disulfide + L-methionine + H2O = L-methionine (S)-S-oxide + [thioredoxin]-dithiol. In terms of biological role, has an important function as a repair enzyme for proteins that have been inactivated by oxidation. Catalyzes the reversible oxidation-reduction of methionine sulfoxide in proteins to methionine. In Leptospira borgpetersenii serovar Hardjo-bovis (strain JB197), this protein is Peptide methionine sulfoxide reductase MsrA.